We begin with the raw amino-acid sequence, 130 residues long: UPF0146 protein AF_0739.1 (130 aa).

It belongs to the UPF0146 family.

The protein is UPF0146 protein AF_0739.1 of Archaeoglobus fulgidus (strain ATCC 49558 / DSM 4304 / JCM 9628 / NBRC 100126 / VC-16).